The primary structure comprises 238 residues: Uridylate kinase (238 aa).

Residue 13–16 participates in ATP binding; it reads KLSG. Gly-53 contributes to the UMP binding site. ATP contacts are provided by Gly-54 and Arg-58. UMP is bound by residues Asp-73 and 134-141; that span reads AGLPYFST. 3 residues coordinate ATP: Asn-162, Tyr-168, and Asp-171.

It belongs to the UMP kinase family. As to quaternary structure, homohexamer.

Its subcellular location is the cytoplasm. The enzyme catalyses UMP + ATP = UDP + ADP. It participates in pyrimidine metabolism; CTP biosynthesis via de novo pathway; UDP from UMP (UMPK route): step 1/1. Inhibited by UTP. Its function is as follows. Catalyzes the reversible phosphorylation of UMP to UDP. This is Uridylate kinase from Clavibacter michiganensis subsp. michiganensis (strain NCPPB 382).